Here is a 250-residue protein sequence, read N- to C-terminus: Probable transcriptional regulatory protein SCO1521 (250 aa).

The protein belongs to the TACO1 family.

Its subcellular location is the cytoplasm. This chain is Probable transcriptional regulatory protein SCO1521, found in Streptomyces coelicolor (strain ATCC BAA-471 / A3(2) / M145).